The primary structure comprises 618 residues: Tyrosine-protein kinase ZAP-70 (618 aa).

Residues 10–102 (FFYGSISRAE…GLPCNLRKPC (93 aa)) enclose the SH2 1 domain. The segment at 103 to 162 (NRPPGLEPQPGVFDCLRDAMVRDYVRQTWKLEGDALEQAIISQAPQVEKLIATTAHERMP) is interdomain A. In terms of domain architecture, SH2 2 spans 163-254 (WYHSSLTREE…GLIYRLKEVC (92 aa)). The residue at position 248 (Tyr-248) is a Phosphotyrosine. The tract at residues 255 to 336 (PNSSASAAVA…KKLFLKRENL (82 aa)) is interdomain B. A disordered region spans residues 270 to 320 (AHPSTFTQPQRRVDTLNSDGYTPEPARLASSTDKPRPMPMDTSVYESPYSD). Polar residues predominate over residues 273 to 289 (STFTQPQRRVDTLNSDG). Residue Ser-287 is modified to Phosphoserine. Position 290 is a phosphotyrosine (Tyr-290). Tyr-314 bears the Phosphotyrosine; by LCK mark. Phosphotyrosine is present on Tyr-318. Positions 337-597 (LVADIELGCG…VEQRMRNYYY (261 aa)) constitute a Protein kinase domain. Residues 343–351 (LGCGNFGSV) and Lys-368 contribute to the ATP site. The active-site Proton acceptor is the Asp-460. 2 positions are modified to phosphotyrosine: Tyr-491 and Tyr-492. Residue Lys-543 forms a Glycyl lysine isopeptide (Lys-Gly) (interchain with G-Cter in ubiquitin) linkage.

This sequence belongs to the protein kinase superfamily. Tyr protein kinase family. SYK/ZAP-70 subfamily. Interacts with CD247/CD3Z; this interaction docks ZAP70 at the stimulated TCR. Interacts with NFAM1. Interacts with adapter protein SLA; this interaction negatively regulates T-cell receptor signaling. Interacts with VAV1. Interacts with CBL; this interaction promotes ubiquitination, internalization and subsequent degradation of CD247/CD3Z. Identified in a complex with CBL and UBE2L3. Interacts with SHB. Interacts with adapter protein SLA2; this interaction negatively regulates T-cell receptor signaling. Interacts with CBLB. Interacts (via SH2 domains) with RHOH; this interaction regulates ZAP70 subcellular localization. Interacts with DEF6. Interacts (ubiquitinated form) with OTUD7B and UBASH3B. In terms of processing, phosphorylated on tyrosine residues upon T-cell antigen receptor (TCR) stimulation. Phosphorylation of Tyr-314 and Tyr-314 are essential for ZAP70 positive function on T-lymphocyte activation whereas Tyr-290 has a negative regulatory role. Within the C-terminal kinase domain, Tyr-491 and Tyr-492 are phosphorylated after TCR induction, Tyr-491 playing a negative regulatory role and Tyr-492 a positive. Tyr-492 is dephosphorylated by PTN22. Ubiquitinated in response to T cell activation. Deubiquitinated by OTUD7B. Isoform 1 and isoform 2 are expressed in thymus, spleen and lymph nodes.

The protein localises to the cytoplasm. It localises to the cell membrane. The catalysed reaction is L-tyrosyl-[protein] + ATP = O-phospho-L-tyrosyl-[protein] + ADP + H(+). Activated by phosphorylation at Tyr-492 in the activation loop. Tyrosine kinase that plays an essential role in regulation of the adaptive immune response. Regulates motility, adhesion and cytokine expression of mature T-cells, as well as thymocyte development. Also contributes to the development and activation of primary B-lymphocytes. When antigen presenting cells (APC) activate T-cell receptor (TCR), a serie of phosphorylations lead to the recruitment of ZAP70 to the doubly phosphorylated TCR component CD3Z through ITAM motif at the plasma membrane. This recruitment serves to localization to the stimulated TCR and to relieve its autoinhibited conformation. Release of ZAP70 active conformation is further stabilized by phosphorylation mediated by LCK. Subsequently, ZAP70 phosphorylates at least 2 essential adapter proteins: LAT and LCP2. In turn, a large number of signaling molecules are recruited and ultimately lead to lymphokine production, T-cell proliferation and differentiation. Furthermore, ZAP70 controls cytoskeleton modifications, adhesion and mobility of T-lymphocytes, thus ensuring correct delivery of effectors to the APC. ZAP70 is also required for TCR-CD3Z internalization and degradation through interaction with the E3 ubiquitin-protein ligase CBL and adapter proteins SLA and SLA2. Thus, ZAP70 regulates both T-cell activation switch on and switch off by modulating TCR expression at the T-cell surface. During thymocyte development, ZAP70 promotes survival and cell-cycle progression of developing thymocytes before positive selection (when cells are still CD4/CD8 double negative). Additionally, ZAP70-dependent signaling pathway may also contribute to primary B-cells formation and activation through B-cell receptor (BCR). The polypeptide is Tyrosine-protein kinase ZAP-70 (Zap70) (Mus musculus (Mouse)).